Here is a 681-residue protein sequence, read N- to C-terminus: Methionine--tRNA ligase (681 aa).

The 'HIGH' region signature appears at 15–25; the sequence is PYANGPIHLGH. Cys-146, Cys-149, Cys-159, and Cys-162 together coordinate Zn(2+). The 'KMSKS' region motif lies at 332–336; that stretch reads KMSKS. Lys-335 is an ATP binding site. The segment at 547 to 569 is disordered; the sequence is DNMAQAPKDNGKAKKDKKEAKSE. The span at 555–569 shows a compositional bias: basic and acidic residues; it reads DNGKAKKDKKEAKSE. The tRNA-binding domain occupies 580–681; it reads DFAKIDLRIA…SGAQPGMQVK (102 aa).

This sequence belongs to the class-I aminoacyl-tRNA synthetase family. MetG type 1 subfamily. In terms of assembly, homodimer. It depends on Zn(2+) as a cofactor.

Its subcellular location is the cytoplasm. It catalyses the reaction tRNA(Met) + L-methionine + ATP = L-methionyl-tRNA(Met) + AMP + diphosphate. Its function is as follows. Is required not only for elongation of protein synthesis but also for the initiation of all mRNA translation through initiator tRNA(fMet) aminoacylation. The sequence is that of Methionine--tRNA ligase from Hahella chejuensis (strain KCTC 2396).